A 184-amino-acid polypeptide reads, in one-letter code: MRPGAGANPSLPDDLVEVGYVGGAYGVRGWIKVQPHGDAEALLHASTWWLKPAAGAPAVSSDWRVLPVGTSREHSGSVVAGSPAVPDRNVAEALRGCTVWVRRAEFPAPADDEFYWVDLIGSTVVNEQQETLGTVAGLIDNGAHQILRIVDEGGTERLVPFVEVYVKSVDVAGKHIVVDWGLDY.

Residues 111-184 (DDEFYWVDLI…HIVVDWGLDY (74 aa)) form the PRC barrel domain.

It belongs to the RimM family. In terms of assembly, binds ribosomal protein uS19.

It is found in the cytoplasm. Its function is as follows. An accessory protein needed during the final step in the assembly of 30S ribosomal subunit, possibly for assembly of the head region. Essential for efficient processing of 16S rRNA. May be needed both before and after RbfA during the maturation of 16S rRNA. It has affinity for free ribosomal 30S subunits but not for 70S ribosomes. This Ralstonia nicotianae (strain ATCC BAA-1114 / GMI1000) (Ralstonia solanacearum) protein is Ribosome maturation factor RimM.